The chain runs to 141 residues: Nucleoside triphosphatase NudI (141 aa).

In terms of domain architecture, Nudix hydrolase spans 1-141 (MRQRTIVCPL…RHTLALKGLL (141 aa)). Residues 38–59 (GGVEPGERIEEALRREVREELG) carry the Nudix box motif.

This sequence belongs to the Nudix hydrolase family. NudI subfamily. In terms of assembly, monomer. The cofactor is Mg(2+).

It carries out the reaction a ribonucleoside 5'-triphosphate + H2O = a ribonucleoside 5'-phosphate + diphosphate + H(+). It catalyses the reaction a 2'-deoxyribonucleoside 5'-triphosphate + H2O = a 2'-deoxyribonucleoside 5'-phosphate + diphosphate + H(+). The enzyme catalyses dUTP + H2O = dUMP + diphosphate + H(+). The catalysed reaction is dTTP + H2O = dTMP + diphosphate + H(+). It carries out the reaction dCTP + H2O = dCMP + diphosphate + H(+). In terms of biological role, catalyzes the hydrolysis of nucleoside triphosphates, with a preference for pyrimidine deoxynucleoside triphosphates (dUTP, dTTP and dCTP). This is Nucleoside triphosphatase NudI from Salmonella schwarzengrund (strain CVM19633).